A 602-amino-acid chain; its full sequence is Oligoendopeptidase F, chromosomal (602 aa).

H388 serves as a coordination point for Zn(2+). E389 is a catalytic residue. Zn(2+) contacts are provided by H392 and H395.

The protein belongs to the peptidase M3B family. Zn(2+) serves as cofactor.

Hydrolyzes peptides containing between 7 and 17 amino acids with a rather wide specificity. This chain is Oligoendopeptidase F, chromosomal (pepF2), found in Lactococcus lactis subsp. cremoris (Streptococcus cremoris).